A 691-amino-acid polypeptide reads, in one-letter code: DNA-directed RNA polymerase subunit beta' (691 aa).

4 residues coordinate Zn(2+): C76, C78, C94, and C97. Residues D496, D498, and D500 each coordinate Mg(2+).

This sequence belongs to the RNA polymerase beta' chain family. RpoC1 subfamily. Mg(2+) serves as cofactor. It depends on Zn(2+) as a cofactor.

Its subcellular location is the plastid. The catalysed reaction is RNA(n) + a ribonucleoside 5'-triphosphate = RNA(n+1) + diphosphate. DNA-dependent RNA polymerase catalyzes the transcription of DNA into RNA using the four ribonucleoside triphosphates as substrates. This is DNA-directed RNA polymerase subunit beta' from Cuscuta exaltata (Tall dodder).